A 503-amino-acid polypeptide reads, in one-letter code: Aminoaldehyde dehydrogenase 1, peroxisomal (503 aa).

4 residues coordinate Na(+): Asn27, Ile28, Asp99, and Leu189. 238 to 245 (GSSATGSK) serves as a coordination point for NAD(+). Glu260 acts as the Proton acceptor in catalysis. Cys294 and Glu393 together coordinate NAD(+). Cys294 acts as the Nucleophile in catalysis. A Microbody targeting signal motif is present at residues 501 to 503 (SKL).

This sequence belongs to the aldehyde dehydrogenase family. Forms homodimers.

It localises to the peroxisome. It catalyses the reaction 3-aminopropanal + NAD(+) + H2O = beta-alanine + NADH + 2 H(+). The enzyme catalyses 4-aminobutanal + NAD(+) + H2O = 4-aminobutanoate + NADH + 2 H(+). The catalysed reaction is 4-guanidinobutanal + NAD(+) + H2O = 4-guanidinobutanoate + NADH + 2 H(+). Its pathway is amine and polyamine biosynthesis; betaine biosynthesis via choline pathway; betaine from betaine aldehyde: step 1/1. Dehydrogenase that catalyzes the oxidation of several aminoaldehydes. Metabolizes and detoxifies aldehyde products of polyamine degradation to non-toxic amino acids. Catalyzes the oxidation of 3-aminopropanal to beta-alanine. Catalyzes the oxidation of 4-aminobutanal to 4-aminobutanoate. Catalyzes the oxidation of 4-guanidinobutanal to 4-guanidinobutanoate. This is Aminoaldehyde dehydrogenase 1, peroxisomal from Pisum sativum (Garden pea).